The primary structure comprises 152 residues: Ribonuclease HI (152 aa).

Positions 1–142 (MDSKVVIYTD…ADKLAVQGRE (142 aa)) constitute an RNase H type-1 domain. Residues Asp-10, Glu-48, Asp-70, and Asp-134 each contribute to the Mg(2+) site.

The protein belongs to the RNase H family. As to quaternary structure, monomer. The cofactor is Mg(2+).

It localises to the cytoplasm. It catalyses the reaction Endonucleolytic cleavage to 5'-phosphomonoester.. Its function is as follows. Endonuclease that specifically degrades the RNA of RNA-DNA hybrids. The protein is Ribonuclease HI of Rickettsia conorii (strain ATCC VR-613 / Malish 7).